We begin with the raw amino-acid sequence, 95 residues long: UPF0381 protein HI_0400 (95 aa).

Belongs to the UPF0381 family.

This Haemophilus influenzae (strain ATCC 51907 / DSM 11121 / KW20 / Rd) protein is UPF0381 protein HI_0400.